A 202-amino-acid polypeptide reads, in one-letter code: uncharacterized protein (202 aa).

3 helical membrane passes run 34–54 (AAYV…QARI), 102–122 (MGVA…PLVI), and 125–145 (ILPL…FNKA). The tract at residues 165–202 (NKPAAAVTGTSSNSNNASAKSDGPTITELNENETEKSS) is disordered. Residues 168–185 (AAAVTGTSSNSNNASAKS) are compositionally biased toward low complexity. A phosphoserine mark is found at Ser185 and Ser201.

The protein belongs to the PHO88 family.

It is found in the endoplasmic reticulum membrane. This is an uncharacterized protein from Schizosaccharomyces pombe (strain 972 / ATCC 24843) (Fission yeast).